A 232-amino-acid chain; its full sequence is DNA damage-inducible transcript 4 protein (232 aa).

Positions 1-71 are disordered; sequence MPSLWDRFSS…SGFGPEEDTA (71 aa). Positions 9 to 22 are enriched in low complexity; sequence SSSSTSSSPSSLPR. S19 is subject to Phosphoserine. Phosphothreonine is present on residues T23 and T25. S121 carries the post-translational modification Phosphoserine.

It belongs to the DDIT4 family. As to quaternary structure, monomer. Interacts with BTRC. Identified in a complex with CUL4A, DDB1 and BTRC. Interacts with TXNIP; this inhibits the proteasomal degradation of DDIT4. In terms of processing, phosphorylated by GSK3B; this promotes proteasomal degradation. Post-translationally, polyubiquitinated by a DCX (DDB1-CUL4A-RBX1) E3 ubiquitin-protein ligase complex with BTRC as substrate-recognition component, leading to its proteasomal degradation. As to expression, broadly expressed, with lowest levels in brain, skeletal muscle and intestine. Up-regulated in substantia nigra neurons from Parkinson disease patients (at protein level).

It localises to the mitochondrion. Its subcellular location is the cytoplasm. It is found in the cytosol. Regulates cell growth, proliferation and survival via inhibition of the activity of the mammalian target of rapamycin complex 1 (mTORC1). Inhibition of mTORC1 is mediated by a pathway that involves DDIT4/REDD1, AKT1, the TSC1-TSC2 complex and the GTPase RHEB. Plays an important role in responses to cellular energy levels and cellular stress, including responses to hypoxia and DNA damage. Regulates p53/TP53-mediated apoptosis in response to DNA damage via its effect on mTORC1 activity. Its role in the response to hypoxia depends on the cell type; it mediates mTORC1 inhibition in fibroblasts and thymocytes, but not in hepatocytes. Required for mTORC1-mediated defense against viral protein synthesis and virus replication. Inhibits neuronal differentiation and neurite outgrowth mediated by NGF via its effect on mTORC1 activity. Required for normal neuron migration during embryonic brain development. Plays a role in neuronal cell death. The polypeptide is DNA damage-inducible transcript 4 protein (DDIT4) (Homo sapiens (Human)).